Consider the following 365-residue polypeptide: ATP-dependent (S)-NAD(P)H-hydrate dehydratase (365 aa).

The transit peptide at 1 to 43 (MLVKPSIISGLVRLTSHSPSSSSSVLRRQEFLVRTLCGSPIIR) directs the protein to the chloroplast. Leu2 carries the N-acetylserine modification. The 309-residue stretch at 53-361 (AESVLRTVTP…ECLGESLEDI (309 aa)) folds into the YjeF C-terminal domain. Residues Gly169 and 222 to 228 (NVNEYKR) each bind (6S)-NADPHX. ATP is bound by residues 262–266 (KGKSD) and 281–290 (GSPRRCGGQG). Asp291 provides a ligand contact to (6S)-NADPHX.

This sequence belongs to the NnrD/CARKD family. Requires Mg(2+) as cofactor.

Its subcellular location is the plastid. It localises to the chloroplast. The protein localises to the cytoplasm. The enzyme catalyses (6S)-NADHX + ATP = ADP + phosphate + NADH + H(+). It carries out the reaction (6S)-NADPHX + ATP = ADP + phosphate + NADPH + H(+). In terms of biological role, catalyzes the dehydration of the S-form of NAD(P)HX at the expense of ATP, which is converted to ADP. Together with NAD(P)HX epimerase, which catalyzes the epimerization of the S- and R-forms, the enzyme allows the repair of both epimers of NAD(P)HX, a damaged form of NAD(P)H that is a result of enzymatic or heat-dependent hydration. The sequence is that of ATP-dependent (S)-NAD(P)H-hydrate dehydratase from Arabidopsis thaliana (Mouse-ear cress).